Here is a 339-residue protein sequence, read N- to C-terminus: Dihydroorotate dehydrogenase (quinone) (339 aa).

FMN is bound by residues 62–66 (AGLDK) and threonine 86. A substrate-binding site is contributed by lysine 66. Position 111 to 115 (111 to 115 (NRMGF)) interacts with substrate. FMN contacts are provided by asparagine 139 and asparagine 172. Position 172 (asparagine 172) interacts with substrate. The active-site Nucleophile is the serine 175. Substrate is bound at residue asparagine 177. FMN is bound by residues lysine 217 and threonine 245. 246-247 (NT) provides a ligand contact to substrate. FMN is bound by residues glycine 268, glycine 297, and 318-319 (YS).

The protein belongs to the dihydroorotate dehydrogenase family. Type 2 subfamily. Monomer. It depends on FMN as a cofactor.

It localises to the cell membrane. The catalysed reaction is (S)-dihydroorotate + a quinone = orotate + a quinol. Its pathway is pyrimidine metabolism; UMP biosynthesis via de novo pathway; orotate from (S)-dihydroorotate (quinone route): step 1/1. Catalyzes the conversion of dihydroorotate to orotate with quinone as electron acceptor. This Shewanella frigidimarina (strain NCIMB 400) protein is Dihydroorotate dehydrogenase (quinone).